A 322-amino-acid chain; its full sequence is D-alanine--D-alanine ligase (322 aa).

The 201-residue stretch at 110-310 (KAVLAAAGIP…FDRLVFWIVE (201 aa)) folds into the ATP-grasp domain. An ATP-binding site is contributed by 137–191 (MPPPYVVKPNAEGSSVGVSLVFEGANGPPRQLAAPDWAFGEQVMVEPYIPGLELA). Residues Asp263, Glu277, and Asn279 each contribute to the Mg(2+) site.

It belongs to the D-alanine--D-alanine ligase family. It depends on Mg(2+) as a cofactor. Mn(2+) is required as a cofactor.

It is found in the cytoplasm. The enzyme catalyses 2 D-alanine + ATP = D-alanyl-D-alanine + ADP + phosphate + H(+). It functions in the pathway cell wall biogenesis; peptidoglycan biosynthesis. Functionally, cell wall formation. The protein is D-alanine--D-alanine ligase of Caulobacter sp. (strain K31).